The sequence spans 460 residues: Serine hydroxymethyltransferase, cytosolic (460 aa).

Position 244 is an N6-(pyridoxal phosphate)lysine (Lys244).

The protein belongs to the SHMT family. Homotetramer. Pyridoxal 5'-phosphate serves as cofactor.

The protein localises to the cytoplasm. It catalyses the reaction (6R)-5,10-methylene-5,6,7,8-tetrahydrofolate + glycine + H2O = (6S)-5,6,7,8-tetrahydrofolate + L-serine. It functions in the pathway one-carbon metabolism; tetrahydrofolate interconversion. Its function is as follows. Interconversion of serine and glycine. The sequence is that of Serine hydroxymethyltransferase, cytosolic (SHMT-1) from Encephalitozoon cuniculi (strain GB-M1) (Microsporidian parasite).